The primary structure comprises 167 residues: Photosystem I assembly protein Ycf3 (167 aa).

3 TPR repeats span residues 35–68, 72–105, and 120–153; these read AFSY…ETDA, SYIL…NPSL, and GEQA…APTN.

It belongs to the Ycf3 family.

Its subcellular location is the plastid. It is found in the chloroplast thylakoid membrane. Functionally, essential for the assembly of the photosystem I (PSI) complex. May act as a chaperone-like factor to guide the assembly of the PSI subunits. This chain is Photosystem I assembly protein Ycf3, found in Chlorella vulgaris (Green alga).